The following is a 921-amino-acid chain: Isoleucine--tRNA ligase (921 aa).

Residues Pro-57–His-67 carry the 'HIGH' region motif. Glu-552 contributes to the L-isoleucyl-5'-AMP binding site. Positions Lys-593–Ser-597 match the 'KMSKS' region motif. Residue Lys-596 participates in ATP binding. 4 residues coordinate Zn(2+): Cys-888, Cys-891, Cys-908, and Cys-911.

The protein belongs to the class-I aminoacyl-tRNA synthetase family. IleS type 1 subfamily. As to quaternary structure, monomer. The cofactor is Zn(2+).

It is found in the cytoplasm. It carries out the reaction tRNA(Ile) + L-isoleucine + ATP = L-isoleucyl-tRNA(Ile) + AMP + diphosphate. Its function is as follows. Catalyzes the attachment of isoleucine to tRNA(Ile). As IleRS can inadvertently accommodate and process structurally similar amino acids such as valine, to avoid such errors it has two additional distinct tRNA(Ile)-dependent editing activities. One activity is designated as 'pretransfer' editing and involves the hydrolysis of activated Val-AMP. The other activity is designated 'posttransfer' editing and involves deacylation of mischarged Val-tRNA(Ile). This Listeria welshimeri serovar 6b (strain ATCC 35897 / DSM 20650 / CCUG 15529 / CIP 8149 / NCTC 11857 / SLCC 5334 / V8) protein is Isoleucine--tRNA ligase.